A 59-amino-acid chain; its full sequence is Conotoxin Bu1.2 (59 aa).

The N-terminal stretch at 1–16 (MFTVFLLVVLATTVVS) is a signal peptide. Positions 17 to 42 (FSTDDESDGSNEEPSADQAARSAMNR) are excised as a propeptide. The segment at 18 to 43 (STDDESDGSNEEPSADQAARSAMNRP) is disordered. The span at 19-31 (TDDESDGSNEEPS) shows a compositional bias: acidic residues. 2 disulfide bridges follow: Cys46–Cys52 and Cys47–Cys57. Gly58 is modified (glycine amide).

The protein belongs to the conotoxin A superfamily. As to expression, expressed by the venom duct.

It is found in the secreted. The sequence is that of Conotoxin Bu1.2 from Conus bullatus (Bubble cone).